Consider the following 524-residue polypeptide: Probable cytochrome P450 519C1 (524 aa).

The helical transmembrane segment at 1–21 (MNILLLIFYFLVCFLIFDFIK) threads the bilayer. Cysteine 470 provides a ligand contact to heme.

The protein belongs to the cytochrome P450 family. Requires heme as cofactor.

The protein localises to the membrane. The protein is Probable cytochrome P450 519C1 (cyp519C1) of Dictyostelium discoideum (Social amoeba).